Consider the following 574-residue polypeptide: Galectin-3-binding protein (574 aa).

The first 18 residues, 1–18, serve as a signal peptide directing secretion; the sequence is MALLWLLSVFLLVPGTQG. Residues 24–124 form the SRCR domain; the sequence is MRLVNGASAS…HEKDAGVVCS (101 aa). Intrachain disulfides connect Cys-49-Cys-113, Cys-62-Cys-123, and Cys-93-Cys-103. 4 N-linked (GlcNAc...) asparagine glycosylation sites follow: Asn-69, Asn-96, Asn-102, and Asn-125. Positions 153-221 constitute a BTB domain; it reads CDLFIQVTGQ…FYSRRIEVSM (69 aa). The 101-residue stretch at 260–360 folds into the BACK domain; the sequence is PLELYEYAQA…MLPQELFELQ (101 aa). N-linked (GlcNAc...) asparagine glycans are attached at residues Asn-362, Asn-398, Asn-540, and Asn-569.

In terms of assembly, homodimers and homomultimers. The multimers form ring-like structures with a diameter of 30-40 nm. Binds LGALS1 and LGALS3. Binds ITGB1, COL4A1, COL5A1, COL6A1, FN1 and NID. The unglycosylated form interacts with PDE4DIP; this interaction, which is PDE4DIP isoform-specific, may connect a pericentrosomal complex to the gamma-tubulin ring complex (gamma-TuRC) to promote microtubule assembly and acetylation. As to expression, detected in thyroid (at protein level).

The protein resides in the secreted. The protein localises to the extracellular space. Its subcellular location is the extracellular matrix. Its function is as follows. Promotes integrin-mediated cell adhesion. May stimulate host defense against viruses and tumor cells. The protein is Galectin-3-binding protein (Lgals3bp) of Rattus norvegicus (Rat).